A 348-amino-acid chain; its full sequence is Fe(3+) ions import ATP-binding protein FbpC (348 aa).

Positions 7–237 (VELRNVTKRF…PASRFMASFM (231 aa)) constitute an ABC transporter domain. 39 to 46 (GPSGCGKT) contacts ATP.

It belongs to the ABC transporter superfamily. Fe(3+) ion importer (TC 3.A.1.10) family. The complex is composed of two ATP-binding proteins (FbpC), two transmembrane proteins (FbpB) and a solute-binding protein (FbpA).

It is found in the cell inner membrane. The catalysed reaction is Fe(3+)(out) + ATP + H2O = Fe(3+)(in) + ADP + phosphate + H(+). Its function is as follows. Part of the ABC transporter complex FbpABC involved in Fe(3+) ions import. Responsible for energy coupling to the transport system. The protein is Fe(3+) ions import ATP-binding protein FbpC of Escherichia coli O157:H7.